Here is a 375-residue protein sequence, read N- to C-terminus: MTIIPKHPSPTLFKPLALGKCQLQHRIVMSPTTRYRADEAAVPLPFVKEYYAQRASDPGALLITEATNICPNSVGEAHIPGIWSKTQCEAWREVVSQVHAKECYIFCQIYATGRSADPELLASRGFEQVSSSAVAAEPGCQPPRALDEEEIQKYISDYAQAARNAIEVGFDGVEIHGANGYLIDQFTQASCNQRTDEWGGDIPNRARFALQVTMAVINAIGPDRVGMKLSPWSQYSGMGIMGDLVPQFEYLILQLRQLGIAYLHLANSRWLDQMTTHPDPNHLTFVKVWGRSLPVILAGGYDATSAPEVIEMVYADYDNVAIGFGRYFTSTPDLPFRMKNGIALQKYDRSSFYTCLTKTGYLDYPYSPEYLCRSS.

Residues 31 to 33 (PTT), Ala66, Gln108, and His176 each bind FMN. 2 residues coordinate substrate: His176 and Asn179. Tyr181 serves as the catalytic Proton donor. FMN-binding positions include Lys228, Gly300, 325–326 (GR), and Arg326. Tyr353 provides a ligand contact to substrate.

Belongs to the NADH:flavin oxidoreductase/NADH oxidase family. The cofactor is FMN.

The catalysed reaction is dihydrochanoclavine-I aldehyde + NADP(+) = chanoclavine-I aldehyde + NADPH + H(+). It participates in alkaloid biosynthesis; ergot alkaloid biosynthesis. Its function is as follows. Chanoclavine-I aldehyde reductase; part of the gene cluster that mediates the biosynthesis of isofumigaclavines, fungal ergot alkaloids. The tryptophan dimethylallyltransferase ifgA catalyzes the first step of ergot alkaloid biosynthesis by condensing dimethylallyl diphosphate (DMAP) and tryptophan to form 4-dimethylallyl-L-tryptophan. The second step is catalyzed by the methyltransferase ifgB that methylates 4-dimethylallyl-L-tryptophan in the presence of S-adenosyl-L-methionine, resulting in the formation of N-methyl-dimethylallyl-L-tryptophan. The catalase ifgD and the FAD-dependent oxidoreductase ifgC then transform N-methyl-dimethylallyl-L-tryptophan to chanoclavine-I which is further oxidized by ifgE in the presence of NAD(+), resulting in the formation of chanoclavine-I aldehyde. The chanoclavine-I aldehyde reductases ifgG and/or fgaOx3 reduce chanoclavine-I aldehyde to dihydrochanoclavine-I aldehyde that spontaneously dehydrates to form 6,8-dimethyl-6,7-didehydroergoline. The festuclavine dehydrogenases ifgF1 and/or ifgF2 then catalyze the reduction of 6,8-dimethyl-6,7-didehydroergoline to form festuclavine. Hydrolysis of festuclavine by a yet undetermined cytochrome P450 monooxygenase (called ifgH) then leads to the formation of isofumigaclavine B which is in turn acetylated by ifgI to isofumigaclavine A. Penicillium roqueforti has interestingly at least two sets of genes for the consumption of chanoclavine-I aldehyde on three different loci, the OYEs ifgG/fgaOx3 and the festuclavine synthase homologs ifgF1/ifgF2. The reason for the duplication of these genes is unclear, probably to ensure the conversion of chanoclavine-I aldehyde by differential gene expression under various environmental conditions. The chain is Chanoclavine-I aldehyde reductase ifgG from Penicillium roqueforti (strain FM164).